A 206-amino-acid chain; its full sequence is Small ribosomal subunit protein uS4 (206 aa).

Residues 94 to 157 enclose the S4 RNA-binding domain; that stretch reads RRLDNVVYRL…RRRTYFKNLI (64 aa).

The protein belongs to the universal ribosomal protein uS4 family. As to quaternary structure, part of the 30S ribosomal subunit. Contacts protein S5. The interaction surface between S4 and S5 is involved in control of translational fidelity.

Functionally, one of the primary rRNA binding proteins, it binds directly to 16S rRNA where it nucleates assembly of the body of the 30S subunit. With S5 and S12 plays an important role in translational accuracy. The chain is Small ribosomal subunit protein uS4 from Roseiflexus sp. (strain RS-1).